Reading from the N-terminus, the 487-residue chain is MGETVPRRRREDEKSIQSDEPKTTSLQKEVGLISGICIIVGTIIGSGIFISPKSVLSNTQAVGPCLIIWAACGVLGTLGALCFAELGTMITKSGGEYPYLMEAFGPIPAYLFSWSSLLVMKPSSFAIICLSFSEYVATPFYSGCEPPKVVVKCLAAAAIMLITTVNSLSVRLGSYVQNFFTAAKLVIVAIIIISGLVLLAQGNTKNFENSFEGAEVSVGAISLALYNGLWAYDGWNQLNYITEELRNPFRNLPLAIIFGIPLVTVCYILINISYFTVMTPTELLQSQAVAVTFGDRVLYPASWIVPVFVAFSTIGAANGTCFTAGRLVYVAGREGHMLKVLSYISVRRLTPAPAIIFYGIVATIYIIPGDINSLVNYFSFATWLFYGLTILGLIVMRFTRKELERPIKVPIFIPILVTFIAAFLVLAPVITNPAWEYLYCVLFILSGLVFYFLFVYYKFEWAQKISKPITMHLQMLMEVVPPEPDPK.

The interval 1–22 (MGETVPRRRREDEKSIQSDEPK) is disordered. The Cytoplasmic portion of the chain corresponds to 1-31 (MGETVPRRRREDEKSIQSDEPKTTSLQKEVG). Ser18 carries the post-translational modification Phosphoserine. Residues 32–55 (LISGICIIVGTIIGSGIFISPKSV) traverse the membrane as a helical segment. Position 43 to 47 (43 to 47 (IIGSG)) interacts with L-arginine. The Extracellular portion of the chain corresponds to 56–62 (LSNTQAV). A helical transmembrane segment spans residues 63-84 (GPCLIIWAACGVLGTLGALCFA). The Cytoplasmic portion of the chain corresponds to 85 to 110 (ELGTMITKSGGEYPYLMEAFGPIPAY). Residues 111-137 (LFSWSSLLVMKPSSFAIICLSFSEYVA) traverse the membrane as a helical segment. Topologically, residues 138–147 (TPFYSGCEPP) are extracellular. 2 helical membrane passes run 148–169 (KVVVKCLAAAAIMLITTVNSLS) and 170–193 (VRLGSYVQNFFTAAKLVIVAIIII). Topologically, residues 194–217 (SGLVLLAQGNTKNFENSFEGAEVS) are extracellular. A helical transmembrane segment spans residues 218–238 (VGAISLALYNGLWAYDGWNQL). Asp233 contacts L-arginine. Topologically, residues 239–251 (NYITEELRNPFRN) are cytoplasmic. The chain crosses the membrane as a helical span at residues 252–274 (LPLAIIFGIPLVTVCYILINISY). The Extracellular segment spans residues 275–302 (FTVMTPTELLQSQAVAVTFGDRVLYPAS). The chain crosses the membrane as a helical span at residues 303–325 (WIVPVFVAFSTIGAANGTCFTAG). Residues 326 to 351 (RLVYVAGREGHMLKVLSYISVRRLTP) lie on the Cytoplasmic side of the membrane. 2 helical membrane-spanning segments follow: residues 352–370 (APAIIFYGIVATIYIIPGD) and 371–391 (INSLVNYFSFATWLFYGLTIL). Residues 392–410 (GLIVMRFTRKELERPIKVP) lie on the Cytoplasmic side of the membrane. Residues 411 to 431 (IFIPILVTFIAAFLVLAPVIT) form a helical membrane-spanning segment. Residues 432-434 (NPA) lie on the Extracellular side of the membrane. The chain crosses the membrane as a helical span at residues 435–450 (WEYLYCVLFILSGLVF). Over 451-487 (YFLFVYYKFEWAQKISKPITMHLQMLMEVVPPEPDPK) the chain is Cytoplasmic.

The protein belongs to the amino acid-polyamine-organocation (APC) superfamily. Disulfide-linked heterodimer composed of the catalytic light chain subunit SLC7A9 and the heavy chain subunit. The heterodimer is the minimal functional unit. Assembles in heterotetramers (dimers of heterodimers) and higher order oligomers. Interacts with CAV1. In terms of tissue distribution, kidney and small intestine.

The protein localises to the apical cell membrane. It carries out the reaction L-leucine(out) + L-arginine(in) = L-leucine(in) + L-arginine(out). It catalyses the reaction L-histidine(out) + L-arginine(in) = L-histidine(in) + L-arginine(out). The enzyme catalyses L-arginine(in) + L-phenylalanine(out) = L-arginine(out) + L-phenylalanine(in). The catalysed reaction is L-cysteine(out) + L-arginine(in) = L-cysteine(in) + L-arginine(out). It carries out the reaction L-cystine(out) + L-arginine(in) = L-cystine(in) + L-arginine(out). It catalyses the reaction L-lysine(out) + L-arginine(in) = L-lysine(in) + L-arginine(out). Its function is as follows. Mediates the electrogenic exchange between cationic amino acids and neutral amino acids, with a stoichiometry of 1:1. Has system b(0,+)-like activity with high affinity for extracellular cationic amino acids and L-cystine and lower affinity for intracellular neutral amino acids. Substrate exchange is driven by high concentration of intracellular neutral amino acids and the intracellular reduction of L-cystine to L-cysteine. Required for reabsorption of L-cystine and dibasic amino acids across the brush border membrane in renal proximal tubules. The polypeptide is b(0,+)-type amino acid transporter 1 (Oryctolagus cuniculus (Rabbit)).